Consider the following 449-residue polypeptide: GTPase Der (449 aa).

EngA-type G domains lie at 4-174 and 183-358; these read PIVA…PPKT and LRIA…VQRQ. Residues 10–17, 57–61, 126–129, 189–196, 236–240, and 301–304 contribute to the GTP site; these read GRPNVGKS, DTAGV, NKCD, DTAGI, and NKWD. A KH-like domain is found at 359–444; that stretch reads KRVPTSELNN…PIVIVFRSRE (86 aa).

The protein belongs to the TRAFAC class TrmE-Era-EngA-EngB-Septin-like GTPase superfamily. EngA (Der) GTPase family. Associates with the 50S ribosomal subunit.

Functionally, GTPase that plays an essential role in the late steps of ribosome biogenesis. This chain is GTPase Der, found in Chloroflexus aurantiacus (strain ATCC 29366 / DSM 635 / J-10-fl).